The primary structure comprises 183 residues: uncharacterized protein (183 aa).

It to A.muscaria DOPA 4,5-dioxygenase.

This is an uncharacterized protein from Botryotinia fuckeliana (Noble rot fungus).